The primary structure comprises 505 residues: Glycerol kinase (505 aa).

An ADP-binding site is contributed by Thr-14. Residues Thr-14, Thr-15, and Ser-16 each contribute to the ATP site. Thr-14 contacts sn-glycerol 3-phosphate. Arg-18 is an ADP binding site. Sn-glycerol 3-phosphate is bound by residues Arg-84, Glu-85, Tyr-136, and Asp-246. Positions 84, 85, 136, 246, and 247 each coordinate glycerol. Residues Thr-268 and Gly-311 each coordinate ADP. 4 residues coordinate ATP: Thr-268, Gly-311, Gln-315, and Gly-412. ADP is bound by residues Gly-412 and Asn-416.

It belongs to the FGGY kinase family.

It carries out the reaction glycerol + ATP = sn-glycerol 3-phosphate + ADP + H(+). Its pathway is polyol metabolism; glycerol degradation via glycerol kinase pathway; sn-glycerol 3-phosphate from glycerol: step 1/1. Its activity is regulated as follows. Inhibited by fructose 1,6-bisphosphate (FBP). Key enzyme in the regulation of glycerol uptake and metabolism. Catalyzes the phosphorylation of glycerol to yield sn-glycerol 3-phosphate. In Vibrio parahaemolyticus serotype O3:K6 (strain RIMD 2210633), this protein is Glycerol kinase.